We begin with the raw amino-acid sequence, 326 residues long: Polycomb complex protein BMI-1-A (326 aa).

The RING-type zinc finger occupies 18-57 (CVLCGGYFIDATTIIECLHSFCKTCIVRYLETSKYCPICD). Residues 81–95 (KLVPGLFKGEMKRRR) carry the Nuclear localization signal motif. Disordered stretches follow at residues 239–262 (NPHTDRINHTSGDMESDSGSDKAG) and 274–326 (CIPS…ISSG). Positions 290-303 (ISSTINGTSSSSSS) are enriched in low complexity.

In terms of assembly, component of a PRC1-like complex. Interacts with cbx4.

The protein resides in the nucleus. Component of a Polycomb group (PcG) multiprotein PRC1-like complex, a complex class required to maintain the transcriptionally repressive state of many genes, including Hox genes, throughout development. PcG PRC1 complex acts via chromatin remodeling and modification of histones; it mediates monoubiquitination of histone H2A 'Lys-119', rendering chromatin heritably changed in its expressibility. In the PRC1 complex, it is required to stimulate the E3 ubiquitin-protein ligase activity of rnf2. The chain is Polycomb complex protein BMI-1-A (bmi1a) from Xenopus laevis (African clawed frog).